A 287-amino-acid chain; its full sequence is mRNA-capping enzyme regulatory subunit OPG124 (287 aa).

The protein belongs to the orthopoxvirus mRNA-capping enzyme regulatory subunit family. Interacts with the late transcription elongation factor VLTF-4/OPG110. Interacts with the late transcription factors VLTF-1.

It is found in the virion. Functionally, acts with RNA polymerase to initiate transcription from late gene promoters. The sequence is that of mRNA-capping enzyme regulatory subunit OPG124 (OPG124) from Monkeypox virus.